A 214-amino-acid polypeptide reads, in one-letter code: Adenylate kinase (214 aa).

10–15 is an ATP binding site; the sequence is GAGKGT. Positions 30 to 59 are NMP; that stretch reads STGDMLRAAIKAGTELGLNAKAVMDAGQLV. Residues T31, R36, 57 to 59, 85 to 88, and Q92 each bind AMP; these read QLV and GFPR. Residues 122–159 are LID; that stretch reads GRRVHSGSGRTYHVVFNPPKVEGKDDVTGEDLVIRADD. ATP contacts are provided by residues R123 and 132–133; that span reads TY. AMP-binding residues include R156 and R167. Q200 is a binding site for ATP.

It belongs to the adenylate kinase family. In terms of assembly, monomer.

The protein localises to the cytoplasm. It carries out the reaction AMP + ATP = 2 ADP. It participates in purine metabolism; AMP biosynthesis via salvage pathway; AMP from ADP: step 1/1. Its function is as follows. Catalyzes the reversible transfer of the terminal phosphate group between ATP and AMP. Plays an important role in cellular energy homeostasis and in adenine nucleotide metabolism. The chain is Adenylate kinase from Aeromonas salmonicida (strain A449).